Consider the following 283-residue polypeptide: Pyridoxine/pyridoxal/pyridoxamine kinase (283 aa).

Ser23 and His59 together coordinate substrate. Asp125 provides a ligand contact to ATP. Tyr136 is a Mg(2+) binding site. ATP is bound by residues Thr157, Glu162, Thr195, 222 to 225 (HAHV), and Thr232. Glu162 contacts Mg(2+). Asp234 is a binding site for substrate.

It belongs to the pyridoxine kinase family. PdxK subfamily. Homodimer. The cofactor is Mg(2+).

It catalyses the reaction pyridoxal + ATP = pyridoxal 5'-phosphate + ADP + H(+). The catalysed reaction is pyridoxine + ATP = pyridoxine 5'-phosphate + ADP + H(+). The enzyme catalyses pyridoxamine + ATP = pyridoxamine 5'-phosphate + ADP + H(+). Its pathway is cofactor metabolism; pyridoxal 5'-phosphate salvage; pyridoxal 5'-phosphate from pyridoxal: step 1/1. The protein operates within cofactor metabolism; pyridoxal 5'-phosphate salvage; pyridoxine 5'-phosphate from pyridoxine: step 1/1. It functions in the pathway cofactor metabolism; pyridoxal 5'-phosphate salvage; pyridoxamine 5'-phosphate from pyridoxamine: step 1/1. Functionally, B6-vitamer kinase involved in the salvage pathway of pyridoxal 5'-phosphate (PLP). Catalyzes the phosphorylation of pyridoxine (PN), pyridoxal (PL), and pyridoxamine (PM), forming their respective 5'-phosphorylated esters, i.e. PNP, PLP and PMP. The chain is Pyridoxine/pyridoxal/pyridoxamine kinase from Bordetella bronchiseptica (strain ATCC BAA-588 / NCTC 13252 / RB50) (Alcaligenes bronchisepticus).